A 785-amino-acid chain; its full sequence is Mitochondrial intermediate peptidase (785 aa).

Residues 1 to 26 constitute a mitochondrion transit peptide; it reads MLKVTTSRPWVCSRCVRRQVQSRRRL. The disordered stretch occupies residues 26–51; it reads LATASTQYRESRPVPVDNSAPGAKRD. His-566 provides a ligand contact to Zn(2+). Residue Glu-567 is part of the active site. The Zn(2+) site is built by His-570 and His-573.

This sequence belongs to the peptidase M3 family. Zn(2+) serves as cofactor.

The protein resides in the mitochondrion matrix. It catalyses the reaction Release of an N-terminal octapeptide as second stage of processing of some proteins imported into the mitochondrion.. In terms of biological role, cleaves proteins, imported into the mitochondrion, to their mature size. While most mitochondrial precursor proteins are processed to the mature form in one step by mitochondrial processing peptidase (MPP), the sequential cleavage by MIP of an octapeptide after initial processing by MPP is a required step for a subgroup of nuclear-encoded precursor proteins destined for the matrix or the inner membrane. In Botryotinia fuckeliana (strain B05.10) (Noble rot fungus), this protein is Mitochondrial intermediate peptidase (oct1).